Consider the following 835-residue polypeptide: MLFGIKLANDVYPPWKDSYIDYERLKKLLKESVIHDGRSSVDSWSERNESDFVEALDKELEKVYTFQISKYNAVLRKLDDLEENTKSAEKIQKINSEQFKNTLEECLDEAQRLDNFDRLNFTGFIKIVKKHDKLHPNYPSVKSLLQVRLKELPFNNSEEYSPLLYRISYLYEFLRSNYDHPNTVSKSLASTSKLSHFSNLEDASFKSYKFWVHDDNIMEVKARILRHLPALVYASVPNENDDFVDNLESDVRVQPEARLNIGSKSNSLSSDGNSNQDVEIGKSKSVIFPQSYDPTITTLYFDNDFFDLYNNRLLKISGAPTLRLRWIGKLLDKPDIFLEKRTFTENTETGNSSFEEIRLQMKAKFINNFIFKNDPSYKNYLINQLRERGTQKEELEKLSRDFDNIQNFIVEEKLQPVLRATYNRTAFQIPGDQSIRVTIDSNIMYIREDSLDKNRPIRNPENWHRDDIDSNIPNPLRFLRAGEYSKFPYSVMEIKVINQDNSQMPNYEWIKDLTNSHLVNEVPKFSLYLQGVASLFGEDDKYVNILPFWLPDLETDIRKNPQEAYEEEKKTLQKQKSIHDKLDNMRRLSKISVPDGKTTERQGQKDQNTRHVIADLEDHESSDEEGTALPKKSAVKKGKKFKTNAAFLKILAGKNISENGNDPYSDDTDSASSFQLPPGVKKPVHLLKNAGPVKVEAKVWLANERTFNRWLSVTTLLSVLTFSIYNSVQKAEFPQLADLLAYVYFFLTLFCGVWAYRTYLKRLTLIKGRSGKHLDAPVGPILVAVVLIVTLVVNFSVAFKEAARRERGLVNVSSQPSLPRTLKPIQDFIFNLVGE.

An SPX domain is found at 1-145 (MLFGIKLAND…PNYPSVKSLL (145 aa)). The Cytoplasmic portion of the chain corresponds to 1–709 (MLFGIKLAND…WLANERTFNR (709 aa)). Phosphoserine occurs at positions 43, 45, and 50. Residues 126-133 (KIVKKHDK) form an important for inositol polyphosphate binding region. T183 is subject to Phosphothreonine. S195, S198, S270, and S274 each carry phosphoserine. The stretch at 385-413 (LRERGTQKEELEKLSRDFDNIQNFIVEEK) forms a coiled coil. Residues 564-586 (AYEEEKKTLQKQKSIHDKLDNMR) are compositionally biased toward basic and acidic residues. Disordered regions lie at residues 564-610 (AYEE…QNTR) and 616-635 (LEDH…KSAV). Phosphoserine occurs at positions 589 and 592. The span at 597–610 (KTTERQGQKDQNTR) shows a compositional bias: basic and acidic residues. Positions 617-626 (EDHESSDEEG) are enriched in acidic residues. Phosphoserine occurs at positions 621 and 622. The chain crosses the membrane as a helical span at residues 710 to 727 (WLSVTTLLSVLTFSIYNS). Topologically, residues 728 to 735 (VQKAEFPQ) are vacuolar. Residues 736–756 (LADLLAYVYFFLTLFCGVWAY) traverse the membrane as a helical segment. Residues 757 to 778 (RTYLKRLTLIKGRSGKHLDAPV) are Cytoplasmic-facing. Residues 779–799 (GPILVAVVLIVTLVVNFSVAF) traverse the membrane as a helical segment. At 800–835 (KEAARRERGLVNVSSQPSLPRTLKPIQDFIFNLVGE) the chain is on the vacuolar side.

This sequence belongs to the VTC2/3 family. As to quaternary structure, the VTC core complex is an integral membrane heterooligomer composed of the catalytic subunit VTC4 and the accessory subunits VTC1, VTC2 and VTC3. The complex exists in 2 different sub-complexes: VTC1-VTC2-VCT4 and VCT1-VTC3-VTC4. The VCT1-VTC3-VTC4 subcomplex is mostly found on the vacuolar membrane. The VTC1-VTC2-VCT4 subcomplex is observed in the cell periphery, probably ER and nuclear envelope, but localizes to the vacuole under phosphate starvation. Each subunit contains 3 transmembrane helices. VTC1 is a small membrane protein without hydrophilic domain. VTC2, VTC3 and VTC4 are related and have 2 hydrophilic domains that face the cytosol, an N-terminal SPX domain and the central core domain. The central core in VTC4 is the catalytic domain, with the essential catalytic lysine replaced by isoleucine and leucine in VTC2 and VTC3, respectively. The core complex associates with the accessory subunit VTC5. The complex interacts with the v-SNARE NYV1 and with the V(0) subunit of V-ATPase VPH1.

The protein resides in the vacuole membrane. It is found in the cytoplasm. The protein localises to the cell cortex. Its subcellular location is the endoplasmic reticulum membrane. It localises to the cytoplasmic vesicle. The protein resides in the autophagosome membrane. Functionally, accessory subunit of the vacuolar transporter chaperone (VTC) complex. The VTC complex acts as a vacuolar polyphosphate polymerase that catalyzes the synthesis of inorganic polyphosphate (polyP) via transfer of phosphate from ATP to a growing polyP chain, releasing ADP. VTC exposes its catalytic domain VTC4 to the cytosol, where the growing polyP chain winds through a tunnel-shaped pocket, integrating cytoplasmic polymer synthesis with polyP membrane translocation. The VTC complex carries 9 vacuolar transmembrane domains, which are likely to constitute the translocation channel into the organelle lumen. PolyP synthesis is tightly coupled to its transport into the vacuole lumen, in order to avoid otherwise toxic intermediates in the cytosol, and it depends on the proton gradient across the membrane, formed by V-ATPase. The VTC complex also plays a role in vacuolar membrane fusion. Required for SEC18/NSF activity in SNARE priming, membrane binding of LMA1 and V(0) trans-complex formation. Binds inositol hexakisphosphate (Ins6P) and similar inositol polyphosphates, such as 5-diphospho-inositol pentakisphosphate (5-InsP7); these are important intracellular signaling molecules. Inositol polyphosphate binding promotes vacuolar polyphosphate synthesis. The protein is Vacuolar transporter chaperone 3 complex subunit 3 of Saccharomyces cerevisiae (strain ATCC 204508 / S288c) (Baker's yeast).